A 735-amino-acid chain; its full sequence is Two pore calcium channel protein 1B (735 aa).

Residues 1–76 (MEEYLLPGES…ELYFMFTRFD (76 aa)) are Cytoplasmic-facing. Residues 77 to 97 (FLWSLNYLALVVLNFFEKPLW) form a helical membrane-spanning segment. Residues 98–125 (CSKHLAESCNNRDYYYLGELPFLTGAES) lie on the Extracellular side of the membrane. Residues 126–146 (LIFEGVTLLLLIIHILFPISY) form a helical membrane-spanning segment. Topologically, residues 147 to 161 (EGFNLYWRSLLNRLK) are cytoplasmic. Residues 162-182 (VILLLILVADIVVYILLPADF) traverse the membrane as a helical segment. Position 183 (Tyr183) is a topological domain, extracellular. The chain crosses the membrane as a helical; Voltage-sensor span at residues 184-202 (YLPFRIAPYLRVVFFILNI). The Cytoplasmic portion of the chain corresponds to 203–208 (RELRDS). The chain crosses the membrane as a helical span at residues 209–229 (FFILAGMLGTYLNVVALSALF). The Extracellular segment spans residues 230–248 (LLFSSWLAYVFFEDTRQGK). Residues 249 to 263 (TTFTSYGTTLYQMFV) constitute an intramembrane region (pore-forming). Over 264 to 286 (LFTTSNNPDVWIPAYKDSRWYCL) the chain is Extracellular. The helical transmembrane segment at 287–307 (FFVLYVLLGVYFVTNLILAVV) threads the bilayer. Over 308–431 (YDSFKSELVK…ASEKLRGFIR (124 aa)) the chain is Cytoplasmic. EF-hand domains lie at 325-360 (LRLR…LNKY) and 366-401 (ISGD…IGLR). The helical transmembrane segment at 432-452 (GATFEYIIVFVLLVNLVAVII) threads the bilayer. At 453–470 (ETTLDIQNNSGQTFWQKV) the chain is on the extracellular side. The N-linked (GlcNAc...) asparagine glycan is linked to Asn460. The chain crosses the membrane as a helical span at residues 471–491 (EFTFGWLYVIEMALKVYTYGF). At 492-501 (ENYWRDGQNR) the chain is on the cytoplasmic side. The helical transmembrane segment at 502–522 (FDFIVTWVIVIGETTTFVAPD) threads the bilayer. Over 523–531 (DLTFLSNGE) the chain is Extracellular. Residues 532–549 (WIRYLLIARMLRLIRLLM) traverse the membrane as a helical; Voltage-sensor segment. Topologically, residues 550–560 (HVERYRAFVAT) are cytoplasmic. A helical transmembrane segment spans residues 561 to 581 (FLTLIPSLMPYLGTIFCILCF). Topologically, residues 582 to 618 (YCSLGLQIFGGIVNTGNPNLAQTDLAGNDYLLFNFND) are extracellular. The pore-forming intramembrane region spans 619-633 (YPNGMVTLFNILVMG). Residues 634 to 654 (NWQVWMQSYKELTGTSWTYAY) lie on the Extracellular side of the membrane. A helical membrane pass occupies residues 655–675 (FVSFYLISVLWLLNLIVAFVL). The Cytoplasmic portion of the chain corresponds to 676–735 (EAFQAEMDLEASARCVDGDDKEAKRERRRNVGTKTRSQRVDFLLHHMLRSELTECSNDNP).

The protein belongs to the calcium channel alpha-1 subunit (TC 1.A.1.11) family. Two pore calcium channel subfamily. As to quaternary structure, homodimer.

Its subcellular location is the membrane. Inhibited by Al(3+), La(3+) and Gd(3+). Up-regulated by H(2)O(2), cryptogein, salicylic acid (SA) and cold shock. Functionally, functions as a voltage-gated inward-rectifying Ca(2+) channel (VDCC) across the plasma membrane that mediates sucrose-induced Ca(2+) influx in autotrophically grown leaf cells. Acts as the major ROS-responsive Ca(2+) channel and is the possible target of Al-dependent inhibition. Plays a regulatory role in defense responses. This Nicotiana tabacum (Common tobacco) protein is Two pore calcium channel protein 1B (TPC1B).